A 280-amino-acid polypeptide reads, in one-letter code: MQRLWAPVTLRRVLLLRSVYLPHSWAMQEPRLAVLSPRYFSCTNAIRAKEAHKTSTEEQEEVPLNPPQSLAGTEGLYKADSEPVPHNKGDIDPLQDKSIGIFQRFKKTFKQYGKVMVPVHIVTSTVWFGSFYYAAMKGVNLVPFLEFIGLPDWIVGILRDSQGGYALTAYAMYKLATPARYTVTMGGTSLSVQYLRKHGYLSTPPPVKEFLQDKMEETRELLTEKMEETKERFSEKMEETKELLSERMEETKERFSETKDKFSEKLQETKDKMSFRKKAD.

The DUF1279 domain occupies 96–208 (DKSIGIFQRF…GYLSTPPPVK (113 aa)). The helical transmembrane segment at 115–135 (VMVPVHIVTSTVWFGSFYYAA) threads the bilayer. A coiled-coil region spans residues 207–274 (VKEFLQDKME…KLQETKDKMS (68 aa)). Residues 245–280 (SERMEETKERFSETKDKFSEKLQETKDKMSFRKKAD) form a disordered region.

The protein localises to the membrane. This is an uncharacterized protein from Danio rerio (Zebrafish).